A 316-amino-acid polypeptide reads, in one-letter code: PAK4-inhibitor inka1 (316 aa).

Residues 108–130 are disordered; it reads YSEVSGSSLRGEEDDIVEEESET. A compositionally biased stretch (acidic residues) spans 119–128; the sequence is EEDDIVEEES. Inka box stretches follow at residues 182–219 and 289–316; these read DSQD…DLPE and SDIA…AGFL.

It belongs to the INKA family. Interacts with pak4/pak5.

The protein localises to the nucleus. It localises to the cytoplasm. In terms of biological role, inhibitor of the serine/threonine-protein kinase pak4/pak5. Acts by binding pak4/pak5 in a substrate-like manner, inhibiting the protein kinase activity. Required for the proper migration of neural crest cells during embryonic development, probably by inhibiting pak4/pak5. The sequence is that of PAK4-inhibitor inka1 from Xenopus laevis (African clawed frog).